The chain runs to 89 residues: Dynein light chain 1, cytoplasmic (89 aa).

It belongs to the dynein light chain family. Interacts with mett-10; the interaction is direct, and is required for the nuclear localization of mett-10. Component of a dynein-regulating complex composed of at least bicd-1, dlc-1 and egal-1. Interacts with egal-1 and unc-83. Interacts with fbf-2. As to expression, broadly expressed in tissues including the intestine, body wall muscles, germs cells, oocytes, the rectal valve and cells in the head.

The protein localises to the cytoplasm. It localises to the cytoskeleton. It is found in the nucleus envelope. Its subcellular location is the cytoplasmic granule. Its function is as follows. Acts as a non-catalytic accessory component of a dynein complex. Part of a complex with bicd-1 and egal-1, which is recruited to the nuclear envelope by unc-83, where in turn, it recruits dynein to the nuclear surface and regulates nuclear migrations in hypodermal precursor cells. Probably within a dynein motor complex, plays a role in the cell fate specification of the germline and oogenesis. In particular, it inhibits germ cell proliferation. Regulates the function and localization of the RNA-binding protein fbf-2 in the germline. Plays a role in mitotic and meiotic processes. Involved in the pairing of homologous chromosomes. Independently of its dynein-mediated functions, plays a role in germ cell apoptosis. This is Dynein light chain 1, cytoplasmic from Caenorhabditis elegans.